Reading from the N-terminus, the 760-residue chain is 5-methyltetrahydropteroyltriglutamate--homocysteine methyltransferase (760 aa).

5-methyltetrahydropteroyltri-L-glutamate contacts are provided by residues Arg24 to Lys27 and Lys118. L-homocysteine contacts are provided by residues Ile437–Ser439 and Glu490. L-methionine contacts are provided by residues Ile437–Ser439 and Glu490. Residues Arg521–Cys522 and Trp567 each bind 5-methyltetrahydropteroyltri-L-glutamate. Residue Asp605 participates in L-homocysteine binding. Asp605 is a binding site for L-methionine. Glu611 serves as a coordination point for 5-methyltetrahydropteroyltri-L-glutamate. Positions 647, 649, and 671 each coordinate Zn(2+). The Proton donor role is filled by His700. Position 732 (Cys732) interacts with Zn(2+).

Belongs to the vitamin-B12 independent methionine synthase family. Requires Zn(2+) as cofactor.

The enzyme catalyses 5-methyltetrahydropteroyltri-L-glutamate + L-homocysteine = tetrahydropteroyltri-L-glutamate + L-methionine. It participates in amino-acid biosynthesis; L-methionine biosynthesis via de novo pathway; L-methionine from L-homocysteine (MetE route): step 1/1. In terms of biological role, catalyzes the transfer of a methyl group from 5-methyltetrahydrofolate to homocysteine resulting in methionine formation. This chain is 5-methyltetrahydropteroyltriglutamate--homocysteine methyltransferase, found in Mycobacterium leprae (strain TN).